The sequence spans 514 residues: Lysine--tRNA ligase (514 aa).

Residues 1–13 (MSKPNNQNQQNNQ) are compositionally biased toward low complexity. Residues 1–21 (MSKPNNQNQQNNQEPAPEDAN) are disordered. Positions 422 and 429 each coordinate Mg(2+).

It belongs to the class-II aminoacyl-tRNA synthetase family. In terms of assembly, homodimer. Requires Mg(2+) as cofactor.

The protein resides in the cytoplasm. It carries out the reaction tRNA(Lys) + L-lysine + ATP = L-lysyl-tRNA(Lys) + AMP + diphosphate. The sequence is that of Lysine--tRNA ligase from Psychrobacter cryohalolentis (strain ATCC BAA-1226 / DSM 17306 / VKM B-2378 / K5).